The chain runs to 200 residues: Glycerol-3-phosphate acyltransferase (200 aa).

Transmembrane regions (helical) follow at residues 4-24 (ALLA…YWVG), 70-90 (ALGS…FAVI), 110-130 (LGIL…VWLL), and 158-178 (QPLP…GAHR).

This sequence belongs to the PlsY family. As to quaternary structure, probably interacts with PlsX.

The protein localises to the cell inner membrane. It catalyses the reaction an acyl phosphate + sn-glycerol 3-phosphate = a 1-acyl-sn-glycero-3-phosphate + phosphate. Its pathway is lipid metabolism; phospholipid metabolism. Catalyzes the transfer of an acyl group from acyl-phosphate (acyl-PO(4)) to glycerol-3-phosphate (G3P) to form lysophosphatidic acid (LPA). This enzyme utilizes acyl-phosphate as fatty acyl donor, but not acyl-CoA or acyl-ACP. In Synechococcus sp. (strain JA-2-3B'a(2-13)) (Cyanobacteria bacterium Yellowstone B-Prime), this protein is Glycerol-3-phosphate acyltransferase.